Consider the following 1166-residue polypeptide: ATP-dependent helicase/deoxyribonuclease subunit B (1166 aa).

The 278-residue stretch at 1-278 folds into the UvrD-like helicase ATP-binding domain; it reads MGAEFLVGRS…LNLDITYKEL (278 aa). Residues Ser10, Gly11, Lys14, Thr15, Lys16, Thr236, and Arg283 each coordinate ATP. In terms of domain architecture, UvrD-like helicase C-terminal spans 281-586; the sequence is TERHTKTPEL…TFSLIPPALD (306 aa). The [4Fe-4S] cluster site is built by Cys801, Cys1121, Cys1124, and Cys1130.

The protein belongs to the helicase family. AddB/RexB type 1 subfamily. As to quaternary structure, heterodimer of AddA and AddB. It depends on At low magnesium concentrations there is no nuclease activity, but helicase activity is unaffected. as a cofactor. The cofactor is Mg(2+). [4Fe-4S] cluster serves as cofactor.

Its function is as follows. The heterodimer acts both as a highly processive, ATP-dependent DNA helicase and as an ATP-dependent single-stranded exonuclease, acting in both directions. Recognizes the B.subtilis Chi site (5'-AGCGG-3') which transforms the enzyme from a helicase which degrades both DNA strands to one with only 5' to 3' exonuclease activity. This generates a double-stranded DNA with a protruding 3'-terminated single-stranded tail suitable for the initiation of homologous recombination (Chi fragment). The AddB nuclease domain is not required for Chi fragment generation but for recognition of the Chi site; this subunit has 5' -&gt; 3' nuclease activity but no helicase activity. The helicase activity of isolated AddA acts on 3'-tailed substrate and requires AddB to bind to blunt-ended DNA. RecA thread formation during DNA double-strand break repair requires RecJ or AddAB. The chain is ATP-dependent helicase/deoxyribonuclease subunit B from Bacillus subtilis (strain 168).